Reading from the N-terminus, the 151-residue chain is Probable cGMP 3',5'-cyclic phosphodiesterase subunit delta (151 aa).

The protein belongs to the PDE6D/unc-119 family. As to quaternary structure, interacts with Pde6.

The protein resides in the nucleus. Its subcellular location is the cytoplasm. The sequence is that of Probable cGMP 3',5'-cyclic phosphodiesterase subunit delta from Culex quinquefasciatus (Southern house mosquito).